A 923-amino-acid polypeptide reads, in one-letter code: Probable dipeptidyl-aminopeptidase B (923 aa).

Basic and acidic residues predominate over residues 1-16 (MATEKGHGRDDEERVP). A disordered region spans residues 1–21 (MATEKGHGRDDEERVPLTRGS). Topologically, residues 1-99 (MATEKGHGRD…KPMHKSVKIA (99 aa)) are cytoplasmic. Residues 100–120 (LWTLLFLSLGGWSLAFVLFIF) traverse the membrane as a helical; Signal-anchor for type II membrane protein segment. At 121 to 923 (RSHDTYETPI…GLSYNFKHLH (803 aa)) the chain is on the vacuolar side. Residues N135, N351, and N574 are each glycosylated (N-linked (GlcNAc...) asparagine). S756 (charge relay system) is an active-site residue. N815 is a glycosylation site (N-linked (GlcNAc...) asparagine). Active-site charge relay system residues include D833 and H866. N-linked (GlcNAc...) asparagine glycosylation occurs at N902.

Belongs to the peptidase S9B family.

The protein localises to the vacuole membrane. It carries out the reaction Release of an N-terminal dipeptide, Xaa-Yaa-|-Zaa-, from a polypeptide, preferentially when Yaa is Pro, provided Zaa is neither Pro nor hydroxyproline.. Its function is as follows. Type IV dipeptidyl-peptidase which removes N-terminal dipeptides sequentially from polypeptides having unsubstituted N-termini provided that the penultimate residue is proline. The chain is Probable dipeptidyl-aminopeptidase B (DAPB) from Ajellomyces capsulatus (strain G186AR / H82 / ATCC MYA-2454 / RMSCC 2432) (Darling's disease fungus).